A 667-amino-acid chain; its full sequence is Phosphomethylpyrimidine synthase (667 aa).

Residues Asn235, Met264, Tyr293, His329, 349 to 351 (SRG), 390 to 393 (DGMR), and Glu429 contribute to the substrate site. Position 433 (His433) interacts with Zn(2+). Position 456 (Tyr456) interacts with substrate. His497 is a binding site for Zn(2+). Positions 577, 580, and 585 each coordinate [4Fe-4S] cluster. The segment at 618 to 642 (DSYTGSESDTAKRASQREQGMAQMS) is disordered.

The protein belongs to the ThiC family. As to quaternary structure, homodimer. Requires [4Fe-4S] cluster as cofactor.

It catalyses the reaction 5-amino-1-(5-phospho-beta-D-ribosyl)imidazole + S-adenosyl-L-methionine = 4-amino-2-methyl-5-(phosphooxymethyl)pyrimidine + CO + 5'-deoxyadenosine + formate + L-methionine + 3 H(+). Its pathway is cofactor biosynthesis; thiamine diphosphate biosynthesis. Its function is as follows. Catalyzes the synthesis of the hydroxymethylpyrimidine phosphate (HMP-P) moiety of thiamine from aminoimidazole ribotide (AIR) in a radical S-adenosyl-L-methionine (SAM)-dependent reaction. The protein is Phosphomethylpyrimidine synthase of Shewanella pealeana (strain ATCC 700345 / ANG-SQ1).